A 193-amino-acid polypeptide reads, in one-letter code: Superoxide dismutase [Fe] (193 aa).

4 residues coordinate Fe cation: His-27, His-74, Asp-157, and His-161.

The protein belongs to the iron/manganese superoxide dismutase family. Homodimer. Requires Fe cation as cofactor.

The enzyme catalyses 2 superoxide + 2 H(+) = H2O2 + O2. Its function is as follows. Destroys superoxide anion radicals which are normally produced within the cells and which are toxic to biological systems. In Coxiella burnetii (strain RSA 493 / Nine Mile phase I), this protein is Superoxide dismutase [Fe] (sodB).